The sequence spans 498 residues: Lysine--tRNA ligase (498 aa).

2 residues coordinate Mg(2+): Glu409 and Glu416.

The protein belongs to the class-II aminoacyl-tRNA synthetase family. As to quaternary structure, homodimer. Mg(2+) serves as cofactor.

Its subcellular location is the cytoplasm. The enzyme catalyses tRNA(Lys) + L-lysine + ATP = L-lysyl-tRNA(Lys) + AMP + diphosphate. In Coxiella burnetii (strain CbuK_Q154) (Coxiella burnetii (strain Q154)), this protein is Lysine--tRNA ligase.